Consider the following 327-residue polypeptide: Thiamine thiazole synthase (327 aa).

Residues cysteine 86, 107-108 (EA), glycine 115, and valine 182 each bind substrate. Position 216 is a 2,3-didehydroalanine (Cys) (cysteine 216). Residues aspartate 218, histidine 233, methionine 285, and 295-297 (RMG) contribute to the substrate site.

Belongs to the THI4 family. In terms of assembly, homooctamer. Fe cation serves as cofactor. In terms of processing, during the catalytic reaction, a sulfide is transferred from Cys-216 to a reaction intermediate, generating a dehydroalanine residue.

It is found in the cytoplasm. The protein resides in the nucleus. It catalyses the reaction [ADP-thiazole synthase]-L-cysteine + glycine + NAD(+) = [ADP-thiazole synthase]-dehydroalanine + ADP-5-ethyl-4-methylthiazole-2-carboxylate + nicotinamide + 3 H2O + 2 H(+). In terms of biological role, involved in biosynthesis of the thiamine precursor thiazole. Catalyzes the conversion of NAD and glycine to adenosine diphosphate 5-(2-hydroxyethyl)-4-methylthiazole-2-carboxylic acid (ADT), an adenylated thiazole intermediate. The reaction includes an iron-dependent sulfide transfer from a conserved cysteine residue of the protein to a thiazole intermediate. The enzyme can only undergo a single turnover, which suggests it is a suicide enzyme. May have additional roles in adaptation to various stress conditions and in DNA damage tolerance. The sequence is that of Thiamine thiazole synthase from Aspergillus oryzae (strain ATCC 42149 / RIB 40) (Yellow koji mold).